A 345-amino-acid chain; its full sequence is Phosphoribosylformylglycinamidine cyclo-ligase (345 aa).

This sequence belongs to the AIR synthase family.

Its subcellular location is the cytoplasm. It catalyses the reaction 2-formamido-N(1)-(5-O-phospho-beta-D-ribosyl)acetamidine + ATP = 5-amino-1-(5-phospho-beta-D-ribosyl)imidazole + ADP + phosphate + H(+). It functions in the pathway purine metabolism; IMP biosynthesis via de novo pathway; 5-amino-1-(5-phospho-D-ribosyl)imidazole from N(2)-formyl-N(1)-(5-phospho-D-ribosyl)glycinamide: step 2/2. This Limosilactobacillus fermentum (strain NBRC 3956 / LMG 18251) (Lactobacillus fermentum) protein is Phosphoribosylformylglycinamidine cyclo-ligase.